Reading from the N-terminus, the 276-residue chain is Sulfur carrier protein FdhD (276 aa).

Cysteine 122 (cysteine persulfide intermediate) is an active-site residue. Residue 259–264 (FCKPGK) participates in Mo-bis(molybdopterin guanine dinucleotide) binding.

The protein belongs to the FdhD family.

Its subcellular location is the cytoplasm. In terms of biological role, required for formate dehydrogenase (FDH) activity. Acts as a sulfur carrier protein that transfers sulfur from IscS to the molybdenum cofactor prior to its insertion into FDH. This is Sulfur carrier protein FdhD from Photorhabdus laumondii subsp. laumondii (strain DSM 15139 / CIP 105565 / TT01) (Photorhabdus luminescens subsp. laumondii).